Here is a 186-residue protein sequence, read N- to C-terminus: UPF0397 protein LCABL_04350 (186 aa).

5 consecutive transmembrane segments (helical) span residues 12-32 (VVAIGIGTAILFILKRFAVIP), 45-65 (GFLGFIATLFGPIAGFFIGFL), 77-97 (TPWWTWVFTTGLVGMVIGLFW), 112-132 (IVSFNLLQIITNVVSWSLIAP), and 150-170 (GIVSAISNSIATGVIGTILLV).

The protein belongs to the UPF0397 family.

It is found in the cell membrane. The protein is UPF0397 protein LCABL_04350 of Lacticaseibacillus casei (strain BL23) (Lactobacillus casei).